The chain runs to 2157 residues: Conidial yellow pigment biosynthesis polyketide synthase (2157 aa).

Positions 8–244 are N-terminal acylcarrier protein transacylase domain (SAT); it reads YLFGDQTGDF…VMVPIHGPFH (237 aa). Positions 376 to 807 constitute a Ketosynthase family 3 (KS3) domain; that stretch reads LSKIAIIGMS…GGNTALLLED (432 aa). Active-site for beta-ketoacyl synthase activity residues include C548, H683, and H725. Residues 912–1232 form a malonyl-CoA:ACP transacylase (MAT) domain region; it reads FLFTGQGAQY…LSSLYLAGVD (321 aa). The For acyl/malonyl transferase activity role is filled by S1001. Positions 1290-1603 are product template (PT) domain; that stretch reads TTSAQRVVES…RKILDIALPP (314 aa). The N-terminal hotdog fold stretch occupies residues 1294–1425; sequence QRVVESRDDG…CEVKLFDCMA (132 aa). The 305-residue stretch at 1294–1598 folds into the PKS/mFAS DH domain; sequence QRVVESRDDG…FQALSRKILD (305 aa). H1326 functions as the Proton acceptor; for dehydratase activity in the catalytic mechanism. The segment at 1453 to 1598 is C-terminal hotdog fold; that stretch reads AHRLRRGMVY…FQALSRKILD (146 aa). D1511 acts as the Proton donor; for dehydratase activity in catalysis. Residues 1607 to 1638 form a disordered region; that stretch reads SKAQTSPIQSSAPQKPIETAKPTSRPAPPVTM. Polar residues predominate over residues 1608–1619; that stretch reads KAQTSPIQSSAP. The Carrier 1 domain occupies 1645–1722; it reads SAGPSVVVRA…DFKRFVTQLS (78 aa). S1682 carries the O-(pantetheine 4'-phosphoryl)serine modification. The interval 1725–1760 is disordered; sequence VASDSSSTDRESEYSFNGDSCSGLSSPASPGTVSPP. Residues 1741–1759 are compositionally biased toward polar residues; that stretch reads NGDSCSGLSSPASPGTVSP. One can recognise a Carrier 2 domain in the interval 1767-1844; it reads IHENGTMKEI…QIETALDLKP (78 aa). S1804 is subject to O-(pantetheine 4'-phosphoryl)serine. Positions 1847-1888 are disordered; that stretch reads VPTAVPQSQPITLPQSQSTKQLSTRPTSSSDNHPPATSILLQ. Polar residues predominate over residues 1851-1878; that stretch reads VPQSQPITLPQSQSTKQLSTRPTSSSDN. Residues 1877–2149 are claisen cyclase domain; that stretch reads DNHPPATSIL…ELATFMKNAL (273 aa). S1967 (for thioesterase activity) is an active-site residue.

Pantetheine 4'-phosphate is required as a cofactor.

It catalyses the reaction 6 malonyl-CoA + acetyl-CoA + 6 H(+) = naphtopyrone YWA1 + 6 CO2 + 7 CoA + H2O. Its pathway is polyketide biosynthesis; heptaketide naphthopyrone YWA1 biosynthesis. Functionally, non-reducing polyketide synthase that condenses acetate units to form a heptaketide naphthopyrene YWA1, a yellow pigment found in mature asexual spores (conidia), via a polyketomethylene intermediate step. The sequence is that of Conidial yellow pigment biosynthesis polyketide synthase from Emericella nidulans (strain FGSC A4 / ATCC 38163 / CBS 112.46 / NRRL 194 / M139) (Aspergillus nidulans).